Consider the following 301-residue polypeptide: Glycine--tRNA ligase alpha subunit (301 aa).

It belongs to the class-II aminoacyl-tRNA synthetase family. As to quaternary structure, tetramer of two alpha and two beta subunits.

Its subcellular location is the cytoplasm. The enzyme catalyses tRNA(Gly) + glycine + ATP = glycyl-tRNA(Gly) + AMP + diphosphate. The sequence is that of Glycine--tRNA ligase alpha subunit from Pseudoalteromonas atlantica (strain T6c / ATCC BAA-1087).